Here is a 225-residue protein sequence, read N- to C-terminus: ATP-dependent dethiobiotin synthetase BioD (225 aa).

Glu15–Phe20 serves as a coordination point for ATP. Thr19 lines the Mg(2+) pocket. The active site involves Lys40. ATP is bound by residues Asp57, Glu118–Gly121, Asn178–Arg179, and Pro207–Val209. 2 residues coordinate Mg(2+): Asp57 and Glu118.

Belongs to the dethiobiotin synthetase family. Homodimer. Mg(2+) is required as a cofactor.

It is found in the cytoplasm. It carries out the reaction (7R,8S)-7,8-diammoniononanoate + CO2 + ATP = (4R,5S)-dethiobiotin + ADP + phosphate + 3 H(+). It participates in cofactor biosynthesis; biotin biosynthesis; biotin from 7,8-diaminononanoate: step 1/2. In terms of biological role, catalyzes a mechanistically unusual reaction, the ATP-dependent insertion of CO2 between the N7 and N8 nitrogen atoms of 7,8-diaminopelargonic acid (DAPA, also called 7,8-diammoniononanoate) to form a ureido ring. This is ATP-dependent dethiobiotin synthetase BioD from Aromatoleum aromaticum (strain DSM 19018 / LMG 30748 / EbN1) (Azoarcus sp. (strain EbN1)).